Reading from the N-terminus, the 142-residue chain is 3-hydroxyacyl-[acyl-carrier-protein] dehydratase FabZ (142 aa).

The active site involves H48.

The protein belongs to the thioester dehydratase family. FabZ subfamily.

Its subcellular location is the cytoplasm. It carries out the reaction a (3R)-hydroxyacyl-[ACP] = a (2E)-enoyl-[ACP] + H2O. Functionally, involved in unsaturated fatty acids biosynthesis. Catalyzes the dehydration of short chain beta-hydroxyacyl-ACPs and long chain saturated and unsaturated beta-hydroxyacyl-ACPs. This chain is 3-hydroxyacyl-[acyl-carrier-protein] dehydratase FabZ, found in Desulforamulus reducens (strain ATCC BAA-1160 / DSM 100696 / MI-1) (Desulfotomaculum reducens).